We begin with the raw amino-acid sequence, 65 residues long: Large ribosomal subunit protein bL33c (65 aa).

Belongs to the bacterial ribosomal protein bL33 family.

It localises to the plastid. Its subcellular location is the chloroplast. The polypeptide is Large ribosomal subunit protein bL33c (Staurastrum punctulatum (Green alga)).